The chain runs to 106 residues: MSNFIPGEIIPEKGEIELNLGKEIRTVTVSNSGDRPVQVGSHYHFFEANKALIFDRKITFGMRLNIPAGTAIRFEPGDTTDVKLVPFSGLRNVYGFNSLVNGSLDN.

This sequence belongs to the urease beta subunit family. In terms of assembly, heterotrimer of UreA (gamma), UreB (beta) and UreC (alpha) subunits. Three heterotrimers associate to form the active enzyme.

The protein localises to the cytoplasm. The enzyme catalyses urea + 2 H2O + H(+) = hydrogencarbonate + 2 NH4(+). Its pathway is nitrogen metabolism; urea degradation; CO(2) and NH(3) from urea (urease route): step 1/1. The chain is Urease subunit beta from Prochlorococcus marinus (strain MIT 9215).